The following is a 942-amino-acid chain: E3 ubiquitin-protein ligase HACE1 (942 aa).

ANK repeat units lie at residues 23-55, 64-93, 97-126, 130-159, 163-192, 196-226, and 228-253; these read LPDD…NSKF, VKRS…NPNY, SGCT…DVNI, EGLT…NVDV, MGQT…DINR, SGAT…YLPD, and NGIT…QYHP. Residues 428-459 are disordered; it reads KGPDHQDATPTPSFAAAGTESRKELSTDTGDS. Positions 447–459 are enriched in basic and acidic residues; that stretch reads ESRKELSTDTGDS. One can recognise an HECT domain in the interval 607-942; sequence NCAKLKQGIA…HCGSYGYTMA (336 aa). Catalysis depends on Cys-909, which acts as the Glycyl thioester intermediate.

The protein localises to the golgi apparatus. Its subcellular location is the golgi stack membrane. The protein resides in the cytoplasm. It is found in the endoplasmic reticulum. It carries out the reaction S-ubiquitinyl-[E2 ubiquitin-conjugating enzyme]-L-cysteine + [acceptor protein]-L-lysine = [E2 ubiquitin-conjugating enzyme]-L-cysteine + N(6)-ubiquitinyl-[acceptor protein]-L-lysine.. It participates in protein modification; protein ubiquitination. Its function is as follows. E3 ubiquitin-protein ligase involved in Golgi membrane fusion and regulation of small GTPases. Acts as a regulator of Golgi membrane dynamics during the cell cycle: recruited to Golgi membrane by Rab proteins and regulates postmitotic Golgi membrane fusion. Acts by mediating ubiquitination during mitotic Golgi disassembly, ubiquitination serving as a signal for Golgi reassembly later, after cell division. This chain is E3 ubiquitin-protein ligase HACE1 (HACE1), found in Gallus gallus (Chicken).